A 149-amino-acid polypeptide reads, in one-letter code: Immunoglobulin kappa chain variable 6-17 (149 aa).

The first 29 residues, 1 to 29, serve as a signal peptide directing secretion; it reads MHHTSMGIKMESQIQVFVFVFLWLSGVDG. Repeats lie at residues 26 to 35 and 38 to 47; these read GVDGDIVMTQ. A framework-1 region spans residues 42–64; it reads DIVMTQSHKFMSTSVGDRVSITC. Positions 65-75 are complementarity-determining-1; the sequence is KASQDVSTTVA. Residues 76-90 are framework-2; the sequence is WYQQKPGQSPKLLIY. Residues 91–97 form a complementarity-determining-2 region; it reads SASYRYT. Residues 98–129 are framework-3; sequence GVPDRFTGSGSGTDFTFTISSVQAEDLAVYYC. Positions 130-138 are complementarity-determining-3; it reads QQHYSTPPT. The segment at 139–148 is framework-4; the sequence is FGGGTKLEIK.

The polypeptide is Immunoglobulin kappa chain variable 6-17 (Mus musculus (Mouse)).